The chain runs to 233 residues: Small heat shock protein hspF (233 aa).

The 105-residue stretch at 129 to 233 folds into the sHSP domain; that stretch reads IPLFTFFEPL…ILLITVNKFL (105 aa).

It belongs to the small heat shock protein (HSP20) family.

The chain is Small heat shock protein hspF (hspF-1) from Dictyostelium discoideum (Social amoeba).